Here is a 168-residue protein sequence, read N- to C-terminus: MTNYACSITNNIPVKIYTDGACSHNPGPGGWGVYLSYKNHEKKVYGSNINTTNNRMELTATIEALRLLKHSYKVELYTDSQYVQMGITKWIKKWIKNNWETSNKQLVCNVDLWQLLYTLIQKHQVSWHWVRGHSGNIGNEIADKLATNGKIEAMKIAKNNENTKKFLD.

Positions 10 to 151 (NNIPVKIYTD…ADKLATNGKI (142 aa)) constitute an RNase H type-1 domain. Mg(2+) is bound by residues Asp19, Glu57, Asp79, and Asp143.

The protein belongs to the RNase H family. Monomer. Mg(2+) is required as a cofactor.

Its subcellular location is the cytoplasm. The enzyme catalyses Endonucleolytic cleavage to 5'-phosphomonoester.. Functionally, endonuclease that specifically degrades the RNA of RNA-DNA hybrids. This is Ribonuclease H from Orientia tsutsugamushi (strain Boryong) (Rickettsia tsutsugamushi).